A 161-amino-acid chain; its full sequence is Anther-specific protein LAT52 (161 aa).

The signal sequence occupies residues 1–17 (MAKAIVLLSALCILALA). 3 disulfides stabilise this stretch: Cys-35–Cys-106, Cys-38–Cys-147, and Cys-59–Cys-94. Residue Asn-61 is glycosylated (N-linked (GlcNAc...) asparagine).

It belongs to the Ole e I family. In terms of tissue distribution, expressed in anthers and pollen.

May play a role during germination or early tube growth. In Solanum lycopersicum (Tomato), this protein is Anther-specific protein LAT52 (LAT52).